We begin with the raw amino-acid sequence, 297 residues long: 4-hydroxy-tetrahydrodipicolinate synthase (297 aa).

Thr47 lines the pyruvate pocket. The Proton donor/acceptor role is filled by Tyr136. Catalysis depends on Lys165, which acts as the Schiff-base intermediate with substrate. Ile206 provides a ligand contact to pyruvate.

It belongs to the DapA family. Homotetramer; dimer of dimers.

The protein localises to the cytoplasm. The enzyme catalyses L-aspartate 4-semialdehyde + pyruvate = (2S,4S)-4-hydroxy-2,3,4,5-tetrahydrodipicolinate + H2O + H(+). The protein operates within amino-acid biosynthesis; L-lysine biosynthesis via DAP pathway; (S)-tetrahydrodipicolinate from L-aspartate: step 3/4. Functionally, catalyzes the condensation of (S)-aspartate-beta-semialdehyde [(S)-ASA] and pyruvate to 4-hydroxy-tetrahydrodipicolinate (HTPA). The chain is 4-hydroxy-tetrahydrodipicolinate synthase from Campylobacter fetus subsp. fetus (strain 82-40).